The sequence spans 475 residues: Stromelysin-1 (475 aa).

Residues 1-17 (MKGLPVLLWLCTAVCSS) form the signal peptide. The propeptide at 18–97 (YPLHGSEEDA…PRCGVPDVGG (80 aa)) is activation peptide. The Cysteine switch signature appears at 88–95 (PRCGVPDV). C90 is a Zn(2+) binding site. N118 is a glycosylation site (N-linked (GlcNAc...) asparagine). Residues D122 and D156 each coordinate Ca(2+). Zn(2+) is bound by residues H166 and D168. The Ca(2+) site is built by D173, G174, G176, and V178. Residue H181 coordinates Zn(2+). G188, N190, and D192 together coordinate Ca(2+). H194 is a binding site for Zn(2+). Residues D196, D197, and E199 each coordinate Ca(2+). H216 is a binding site for Zn(2+). E217 is an active-site residue. The Zn(2+) site is built by H220 and H226. 4 Hemopexin repeats span residues 285–334 (LPMC…WPSL), 335–381 (PSNM…GLPE), 383–431 (VQKI…FPGI), and 432–475 (GTKV…WFNC). Cysteines 288 and 475 form a disulfide. Residue D295 coordinates Ca(2+). Positions 387 and 436 each coordinate Ca(2+).

The protein belongs to the peptidase M10A family. Ca(2+) serves as cofactor. Requires Zn(2+) as cofactor.

The protein localises to the secreted. It is found in the extracellular space. The protein resides in the extracellular matrix. The catalysed reaction is Preferential cleavage where P1', P2' and P3' are hydrophobic residues.. Its activity is regulated as follows. Inhibited by a synthetic peptide corresponding to the inhibitory cysteine switch motif. Inhibited by ethylenediaminetetraacetic acid (EDTA), 1,10-pheanthroline, 2-mecaptoethanol, dithiothreitol and metalloproteinase inhibitor protein TIMP. Can degrade fibronectin, laminin, gelatins of type I, III, IV, and V; collagens III, IV, X, and IX, and cartilage proteoglycans. Activates procollagenase. Its function is as follows. Metalloproteinase with a rather broad substrate specificity that can degrade fibronectin, laminin, gelatins of type I, III, IV, and V; collagens III, IV, X, and IX, and cartilage proteoglycans. Activates different molecules including growth factors, plasminogen or other matrix metalloproteinases such as MMP9. Once released into the extracellular matrix (ECM), the inactive pro-enzyme is activated by the plasmin cascade signaling pathway. Also acts intracellularly. For example, in dopaminergic neurons, gets activated by the serine protease HTRA2 upon stress and plays a pivotal role in DA neuronal degeneration by mediating microglial activation and alpha-synuclein/SNCA cleavage. In addition, plays a role in immune response and possesses antiviral activity against various viruses. Mechanistically, translocates from the cytoplasm into the cell nucleus upon virus infection to influence NF-kappa-B activities. The chain is Stromelysin-1 (Mmp3) from Rattus norvegicus (Rat).